Reading from the N-terminus, the 478-residue chain is Sugar transporter ERD6-like 15 (478 aa).

12 helical membrane passes run 31-51 (FVLA…IIGY), 67-87 (IADY…GALI), 106-126 (ILFV…LLDL), 129-149 (LLQG…ITEI), 161-181 (FAQL…TIVA), 185-205 (LAIL…FIPE), 267-287 (AFSL…GLNG), 305-325 (FGFI…TVLV), 333-353 (LLLV…ISFF), 366-386 (VLAL…MGSI), 406-426 (MCNL…SYLL), and 432-452 (GTFL…AKLV).

It belongs to the major facilitator superfamily. Sugar transporter (TC 2.A.1.1) family.

The protein resides in the membrane. Functionally, sugar transporter. This chain is Sugar transporter ERD6-like 15, found in Arabidopsis thaliana (Mouse-ear cress).